The sequence spans 264 residues: Isoprenyl transferase (264 aa).

The active site involves Asp43. Asp43 lines the Mg(2+) pocket. Residues 44-47 (GNGR), Trp48, Arg56, His60, and 88-90 (STE) each bind substrate. The active-site Proton acceptor is the Asn91. Substrate-binding positions include Trp92, Arg94, Arg211, and 217–219 (RTS). Glu230 lines the Mg(2+) pocket.

It belongs to the UPP synthase family. In terms of assembly, homodimer. It depends on Mg(2+) as a cofactor.

Catalyzes the condensation of isopentenyl diphosphate (IPP) with allylic pyrophosphates generating different type of terpenoids. The chain is Isoprenyl transferase from Bifidobacterium longum (strain NCC 2705).